A 306-amino-acid chain; its full sequence is MASRPKRRAVSRVPPALGDEEEEDEVEEQDEDDSDEEEDEEDEVVNEEVNIEFEAYSISDNDYDGIKKLLQQLFLKAPVNTAELTNLLIQQNHIGSVIKQTDVSEDSDDEVDEDEIFGFISLLNLTERKGTPCAEQIKELILRLCEKNCEKSMVEQLDRLFNDTARPVGFLLSERFINVPPQIALPMHQQLQKELAEAHRANKPCGKCYFYLLISKTFVEAGKSNSKKKRSNQKKDELMFANAEEEFFYEKAILKFNYSVQEESDTCLGGRWSFDDVPMKPLRTVMLIPGDKMSEIMEKLKEHLSV.

The span at 1 to 10 (MASRPKRRAV) shows a compositional bias: basic residues. Residues 1–45 (MASRPKRRAVSRVPPALGDEEEEDEVEEQDEDDSDEEEDEEDEVV) form a disordered region. The segment covering 18–45 (GDEEEEDEVEEQDEDDSDEEEDEEDEVV) has biased composition (acidic residues). S34 and S104 each carry phosphoserine. The tract at residues 51-159 (IEFEAYSISD…EKSMVEQLDR (109 aa)) is interaction with BRCA2. The interval 153–251 (MVEQLDRLFN…NAEEEFFYEK (99 aa)) is interaction with CDKN1A. Phosphoserine is present on S273.

This sequence belongs to the BCP1 family. As to quaternary structure, interacts with BRCA2, CDKN1A and MTDH/LYRIC. Interacts with DCTN1/p150-glued and ACTR1A/ARP1. Interacts with alpha-, beta- and gamma-tubulins. Interacts with TENT5C; the interaction has no effect on TENT5C poly(A) polymerase function.

The protein resides in the nucleus. The protein localises to the cytoplasm. It localises to the cytoskeleton. Its subcellular location is the microtubule organizing center. It is found in the centrosome. The protein resides in the centriole. The protein localises to the spindle pole. Its function is as follows. During interphase, required for microtubule organizing and anchoring activities. During mitosis, required for the organization and stabilization of the spindle pole. May promote cell cycle arrest by enhancing the inhibition of CDK2 activity by CDKN1A. May be required for repair of DNA damage by homologous recombination in conjunction with BRCA2. May not be involved in non-homologous end joining (NHEJ). The chain is BRCA2 and CDKN1A-interacting protein (BCCIP) from Bos taurus (Bovine).